A 416-amino-acid chain; its full sequence is Gamma-glutamyl phosphate reductase (416 aa).

Belongs to the gamma-glutamyl phosphate reductase family.

The protein resides in the cytoplasm. The catalysed reaction is L-glutamate 5-semialdehyde + phosphate + NADP(+) = L-glutamyl 5-phosphate + NADPH + H(+). It functions in the pathway amino-acid biosynthesis; L-proline biosynthesis; L-glutamate 5-semialdehyde from L-glutamate: step 2/2. Functionally, catalyzes the NADPH-dependent reduction of L-glutamate 5-phosphate into L-glutamate 5-semialdehyde and phosphate. The product spontaneously undergoes cyclization to form 1-pyrroline-5-carboxylate. The polypeptide is Gamma-glutamyl phosphate reductase (Streptococcus mutans serotype c (strain ATCC 700610 / UA159)).